A 951-amino-acid chain; its full sequence is MSSSYGNNGDKNNHEKFGFNLLRKKPQQPSNRSERRADDSSSSEDEAGPSSNYVSSSQLNLPSFRPSGGSTDELNRANRTNVGSSDARYSPRTASNTESGNRRQQMIEDDAIATIRDNSGAARCFDDDDEEEEEHQEQKDSGENPADISPRTSGVTKKLQFKSHPSIIPEDTATQDGGEYYEEKDAEKEDQDDSVSTQSSESKMDHFRHLFRRRSTARPHQETNDGRNSAESHSKGGMRNLNGADDEVEDGGFLSKFLSLTGGGLTPAVNNTDPSGENDHERNAGQNNLEDPIPMSDIAATAQQIVQAHSMMAGKSAPGTQHGASGSASSEHPNGEHNLGTEAGVTSPFEPVSPFNQSTDGETMVSSHQDDAFYVPATNHYDDIDDPDDLEPLGIEGSYIAPVDRVRGGVLGSLLKLYQNQDDQYTKSQLSLNDSSIEQTPEPVDQAGKSDQKTGKKIYNPFHKHSKSQTNVSGANKSGSSMNLPNFKATRPKAAAKNLVKAKNFKKKAAAEARITVHIADLLQRQRFILRLCKALMLYGAPTHRLEEYMVMTSRVLEIDGQFLYVPGCMIISFGDMTTRTSEVQLVRCNQGLNLWKLHGVHSVYKQVVHDIMSVEDANMEIDRILTGKNLYPPWVSVLLYAFCSSMVTPFAFGGDWINMAVAFGIGLCVGSLQFIVSQKSNLYSNVFEVTASIVVSFCGRALGSIPNSNICFGATVQGSLALILPGYIILCGSLELQSRNLVAGAVRMFYAIIYSLFLGFGITLGAALFGWIYHDATNETSCSKNISPWFRFIFVPCFSIGLGLINQARWTQLPVMTLISCCGYVVTYFSGKHFANSTEFTSAMAAFVIGILGNLYSRIWKGFAVSAMLPAIFVQVPSGVASQSSLLAGVQSANAIVNNSTTTVVQDDLSGSMSFGVTMIQVSIGISVGLFASTLFIYPFGKKRTGLFTL.

Polar residues-rich tracts occupy residues 1-10 (MSSSYGNNGD), 68-84 (GGSTDELNRANRTNVGS), and 92-104 (RTASNTESGNRRQ). Disordered regions lie at residues 1-293 (MSSS…EDPI), 313-366 (AGKS…TMVS), and 433-487 (NDSS…LPNF). A compositionally biased stretch (acidic residues) spans 126–135 (DDDDEEEEEH). Over residues 219 to 234 (PHQETNDGRNSAESHS) the composition is skewed to basic and acidic residues. Polar residues-rich tracts occupy residues 318 to 332 (PGTQHGASGSASSEH), 354 to 366 (PFNQSTDGETMVS), and 468 to 484 (SQTNVSGANKSGSSMNL). 10 consecutive transmembrane segments (helical) span residues 635 to 655 (WVSVLLYAFCSSMVTPFAFGG), 657 to 677 (WINMAVAFGIGLCVGSLQFIV), 687 to 707 (VFEVTASIVVSFCGRALGSIP), 711 to 731 (ICFGATVQGSLALILPGYIIL), 753 to 773 (IIYSLFLGFGITLGAALFGWI), 786 to 806 (NISPWFRFIFVPCFSIGLGLI), 811 to 831 (WTQLPVMTLISCCGYVVTYFS), 841 to 861 (FTSAMAAFVIGILGNLYSRIW), 863 to 883 (GFAVSAMLPAIFVQVPSGVAS), and 918 to 938 (VTMIQVSIGISVGLFASTLFI).

The protein belongs to the ThrE exporter (TC 2.A.79) family.

Its subcellular location is the membrane. This is Pheromone-regulated membrane protein 10 from Kluyveromyces lactis (strain ATCC 8585 / CBS 2359 / DSM 70799 / NBRC 1267 / NRRL Y-1140 / WM37) (Yeast).